A 228-amino-acid chain; its full sequence is Glutamate transport system permease protein GluC (228 aa).

Helical transmembrane passes span 16–36, 64–84, 100–120, 145–165, and 195–215; these read FWVT…FGTI, LTLV…LTLA, AVLG…RSGI, IIFP…LIAL, and LFVV…PMGL. One can recognise an ABC transmembrane type-1 domain in the interval 16 to 217; it reads FWVTIKLTIY…ILTLPMGLGL (202 aa).

It belongs to the binding-protein-dependent transport system permease family. HisMQ subfamily. In terms of assembly, the complex is composed of two ATP-binding proteins (GluA), two transmembrane proteins (GluC and GluD) and a solute-binding protein (GluB).

Its subcellular location is the cell membrane. Functionally, part of the ABC transporter complex GluABCD involved in glutamate uptake. Probably responsible for the translocation of the substrate across the membrane. This Corynebacterium glutamicum (strain ATCC 13032 / DSM 20300 / JCM 1318 / BCRC 11384 / CCUG 27702 / LMG 3730 / NBRC 12168 / NCIMB 10025 / NRRL B-2784 / 534) protein is Glutamate transport system permease protein GluC.